Reading from the N-terminus, the 502-residue chain is 4,4'-diapophytoene desaturase (4,4'-diaponeurosporene-forming) (502 aa).

Position 5–17 (valine 5–alanine 17) interacts with FAD.

This sequence belongs to the carotenoid/retinoid oxidoreductase family. CrtN subfamily.

The catalysed reaction is 15-cis-4,4'-diapophytoene + 3 FAD + 3 H(+) = all-trans-4,4'-diaponeurosporene + 3 FADH2. Its pathway is carotenoid biosynthesis; staphyloxanthin biosynthesis; staphyloxanthin from farnesyl diphosphate: step 2/5. In terms of biological role, involved in the biosynthesis of the yellow-orange carotenoid staphyloxanthin, which plays a role in the virulence via its protective function against oxidative stress. Catalyzes three successive dehydrogenation reactions that lead to the introduction of three double bonds into 4,4'-diapophytoene (dehydrosqualene), with 4,4'-diapophytofluene and 4,4'-diapo-zeta-carotene as intermediates, and 4,4'-diaponeurosporene (the major deep-yellow pigment in staphylococci strains) as the end product. This chain is 4,4'-diapophytoene desaturase (4,4'-diaponeurosporene-forming), found in Staphylococcus aureus (strain COL).